We begin with the raw amino-acid sequence, 1194 residues long: UPF0507 protein PICST_55861 (1194 aa).

The VPS9 domain occupies 324-475 (QSYDPEAVKF…LSSSLSDELS (152 aa)).

The protein belongs to the UPF0507 family.

The chain is UPF0507 protein PICST_55861 from Scheffersomyces stipitis (strain ATCC 58785 / CBS 6054 / NBRC 10063 / NRRL Y-11545) (Yeast).